Consider the following 246-residue polypeptide: Protein crossbronx (246 aa).

The UBC core domain maps to glutamine 20 to alanine 177.

It belongs to the ubiquitin-conjugating enzyme family. FTS subfamily.

This Drosophila grimshawi (Hawaiian fruit fly) protein is Protein crossbronx (cbx).